The following is a 236-amino-acid chain: Ribose-5-phosphate isomerase A (236 aa).

Residues Thr-32–Thr-35, Asp-87–Asp-90, and Lys-100–Gly-103 each bind substrate. The active-site Proton acceptor is Glu-109. Substrate is bound at residue Lys-127.

This sequence belongs to the ribose 5-phosphate isomerase family. In terms of assembly, homodimer.

It carries out the reaction aldehydo-D-ribose 5-phosphate = D-ribulose 5-phosphate. It functions in the pathway carbohydrate degradation; pentose phosphate pathway; D-ribose 5-phosphate from D-ribulose 5-phosphate (non-oxidative stage): step 1/1. Its function is as follows. Catalyzes the reversible conversion of ribose-5-phosphate to ribulose 5-phosphate. The chain is Ribose-5-phosphate isomerase A from Haloquadratum walsbyi (strain DSM 16790 / HBSQ001).